A 282-amino-acid chain; its full sequence is Shikimate dehydrogenase (NADP(+)) (282 aa).

Shikimate contacts are provided by residues 15-17 (SKS) and T62. K66 acts as the Proton acceptor in catalysis. Residues N87 and D103 each coordinate shikimate. NADP(+)-binding positions include 127–131 (GAGGA), 151–156 (NRTHTK), and M220. Position 222 (Y222) interacts with shikimate. G244 contributes to the NADP(+) binding site.

The protein belongs to the shikimate dehydrogenase family. Homodimer.

The enzyme catalyses shikimate + NADP(+) = 3-dehydroshikimate + NADPH + H(+). It functions in the pathway metabolic intermediate biosynthesis; chorismate biosynthesis; chorismate from D-erythrose 4-phosphate and phosphoenolpyruvate: step 4/7. Its function is as follows. Involved in the biosynthesis of the chorismate, which leads to the biosynthesis of aromatic amino acids. Catalyzes the reversible NADPH linked reduction of 3-dehydroshikimate (DHSA) to yield shikimate (SA). This chain is Shikimate dehydrogenase (NADP(+)), found in Shewanella putrefaciens (strain CN-32 / ATCC BAA-453).